We begin with the raw amino-acid sequence, 99 residues long: High mobility group nucleosome-binding domain-containing protein 3 (99 aa).

3 stretches are compositionally biased toward basic and acidic residues: residues 1 to 25, 39 to 53, and 62 to 72; these read MPKR…EPTR, PEPK…KEPG, and GKKEEKQEAGK. Residues 1–99 form a disordered region; sequence MPKRKSPENT…KTESVDNEGE (99 aa). Residue Ser-6 is modified to Phosphoserine. Position 10 is a phosphothreonine (Thr-10). Phosphoserine occurs at positions 78 and 93. The segment covering 81-93 has biased composition (basic and acidic residues); the sequence is GETKAEEAQKTES.

It belongs to the HMGN family. Interacts with the ligand binding domain of the thyroid receptor (TR) (in vitro). Requires the presence of thyroid hormone for its interaction. Interacts with transcriptional regulator SEHBP. Interacts with nucleosomes. Expressed in kidney, lung, pancreas, testis, skeletal muscle, heart, thyroid gland, pituitary gland, prostate and uterus. Low expression in liver, spleen, placenta and ovaries.

Its subcellular location is the nucleus. In terms of biological role, binds to nucleosomes, regulating chromatin structure and consequently, chromatin-dependent processes such as transcription, DNA replication and DNA repair. Affects both insulin and glucagon levels and modulates the expression of pancreatic genes involved in insulin secretion. Regulates the expression of the glucose transporter SLC2A2 by binding specifically to its promoter region and recruiting PDX1 and additional transcription factors. Regulates the expression of SLC6A9, a glycine transporter which regulates the glycine concentration in synaptic junctions in the central nervous system, by binding to its transcription start site. May play a role in ocular development and astrocyte function. The polypeptide is High mobility group nucleosome-binding domain-containing protein 3 (HMGN3) (Homo sapiens (Human)).